Reading from the N-terminus, the 146-residue chain is UPF0178 protein BcerKBAB4_2842 (146 aa).

The protein belongs to the UPF0178 family.

This is UPF0178 protein BcerKBAB4_2842 from Bacillus mycoides (strain KBAB4) (Bacillus weihenstephanensis).